Here is a 237-residue protein sequence, read N- to C-terminus: Orotidine 5'-phosphate decarboxylase (237 aa).

Residues Asp-10, Lys-32, 59–68 (DLKLHDIPNT), Thr-118, Arg-180, Gln-189, Gly-209, and Arg-210 contribute to the substrate site. Lys-61 functions as the Proton donor in the catalytic mechanism.

The protein belongs to the OMP decarboxylase family. Type 1 subfamily. Homodimer.

The enzyme catalyses orotidine 5'-phosphate + H(+) = UMP + CO2. It participates in pyrimidine metabolism; UMP biosynthesis via de novo pathway; UMP from orotate: step 2/2. Functionally, catalyzes the decarboxylation of orotidine 5'-monophosphate (OMP) to uridine 5'-monophosphate (UMP). This chain is Orotidine 5'-phosphate decarboxylase, found in Fusobacterium nucleatum subsp. nucleatum (strain ATCC 25586 / DSM 15643 / BCRC 10681 / CIP 101130 / JCM 8532 / KCTC 2640 / LMG 13131 / VPI 4355).